A 417-amino-acid chain; its full sequence is Phosphoglycerate kinase 1 (417 aa).

The residue at position 2 (Ser2) is an N-acetylserine. A phosphoserine mark is found at Ser2 and Ser4. At Lys6 the chain carries N6-succinyllysine. Lys11 carries the post-translational modification N6-acetyllysine. The (2R)-3-phosphoglycerate site is built by Val23, Asp24, Phe25, Asn26, Gln38, and Arg39. The mitochondrial targeting region exposed following cis-trans isomerization by PIN1 and recognized by the TOM complex for mitochondrial translocation of the protein stretch occupies residues 38-43; the sequence is QRIKAA. Residue Lys48 is modified to N6-acetyllysine; alternate. Position 48 is an N6-succinyllysine; alternate (Lys48). Residues Ser62, His63, Gly65, and Arg66 each contribute to the (2R)-3-phosphoglycerate site. The residue at position 75 (Lys75) is an N6-acetyllysine. The residue at position 76 (Tyr76) is a Phosphotyrosine. Residues Lys86 and Lys91 each carry the N6-acetyllysine modification. Lys97 is subject to N6-acetyllysine; alternate. At Lys97 the chain carries N6-(2-hydroxyisobutyryl)lysine; alternate. (2R)-3-phosphoglycerate is bound by residues Leu122 and Arg123. An N6-acetyllysine; alternate modification is found at Lys131. At Lys131 the chain carries N6-malonyllysine; alternate. The residue at position 146 (Lys146) is an N6-acetyllysine. Positions 170 and 171 each coordinate (2R)-3-phosphoglycerate. Lys191 bears the N6-succinyllysine mark. The residue at position 196 (Tyr196) is a Phosphotyrosine. Lys199 carries the post-translational modification N6-acetyllysine. Phosphoserine; by MAPK1 is present on Ser203. Gly214 serves as a coordination point for ADP. Gly214 provides a ligand contact to CDP. AMP is bound by residues Ala215 and Lys216. Residue Ala215 participates in ATP binding. Residue Ala215 participates in Mg(2+) binding. Lys216 is subject to N6-(2-hydroxyisobutyryl)lysine. 2 residues coordinate Mg(2+): Ala218 and Asp219. Asp219 contacts CDP. Lys220 provides a ligand contact to AMP. ATP is bound at residue Lys220. Lys220 bears the N6-(2-hydroxyisobutyryl)lysine mark. Gly238 contacts ADP. Gly238 provides a ligand contact to CDP. Gly239 lines the AMP pocket. Position 239 (Gly239) interacts with ATP. Lys267 and Lys291 each carry N6-acetyllysine. Gly313 contributes to the AMP binding site. Position 313 (Gly313) interacts with ATP. The residue at position 323 (Lys323) is an N6-(2-hydroxyisobutyryl)lysine. The CDP site is built by Gly338, Val340, and Phe343. Residue Phe343 coordinates ADP. Glu344 is a binding site for AMP. Glu344 is a binding site for ATP. Lys361 bears the N6-acetyllysine mark. Asp375 and Thr376 together coordinate ATP. Residue Asp375 coordinates Mg(2+).

Belongs to the phosphoglycerate kinase family. In terms of assembly, monomer. Interacts with kinase MAPK1/ERK2; the interaction is direct, occurs under hypoxic conditions, and promotes its interaction with PIN1. Interacts with peptidyl-prolyl cis-trans isomerase PIN1; the interaction is direct, occurs under hypoxic conditions, and targets the protein to the mitochondrion by promoting interactions with the TOM complex. Interacts with mitochondrial circRNA mcPGK1 (via its 2nd stem-loop); the interaction is direct and targets the protein to the mitochondrion by promoting interactions with the TOM complex. Interacts with pyruvate dehydrogenase kinase PDK1; the interaction is direct, occurs under hypoxic conditions and leads to PDK1-mediated inhibition of pyruvate dehydrogenase complex activity. Mg(2+) is required as a cofactor. In terms of processing, phosphorylated at Ser-203 by MAPK1/ERK2 under hypoxic conditions, which promotes its mitochondrial targeting. Mainly expressed in spermatogonia. Localized on the principle piece in the sperm (at protein level). Expression significantly decreased in the testis of elderly men.

The protein localises to the cytoplasm. It localises to the cytosol. It is found in the mitochondrion matrix. It catalyses the reaction (2R)-3-phosphoglycerate + ATP = (2R)-3-phospho-glyceroyl phosphate + ADP. It carries out the reaction L-seryl-[protein] + ATP = O-phospho-L-seryl-[protein] + ADP + H(+). Its pathway is carbohydrate degradation; glycolysis; pyruvate from D-glyceraldehyde 3-phosphate: step 2/5. Its activity is regulated as follows. Specifically inhibited by heterocyclic compound CBR-470-0. Functionally, catalyzes one of the two ATP producing reactions in the glycolytic pathway via the reversible conversion of 1,3-diphosphoglycerate to 3-phosphoglycerate. Both L- and D- forms of purine and pyrimidine nucleotides can be used as substrates, but the activity is much lower on pyrimidines. In addition to its role as a glycolytic enzyme, it seems that PGK1 acts as a polymerase alpha cofactor protein (primer recognition protein). Acts as a protein kinase when localized to the mitochondrion where it phosphorylates pyruvate dehydrogenase kinase PDK1 to inhibit pyruvate dehydrogenase complex activity and suppress the formation of acetyl-coenzyme A from pyruvate, and consequently inhibit oxidative phosphorylation and promote glycolysis. May play a role in sperm motility. The protein is Phosphoglycerate kinase 1 (PGK1) of Homo sapiens (Human).